The primary structure comprises 456 residues: Non-structural protein V (456 aa).

The interval 53 to 92 is disordered; that stretch reads SGESEQVEGGMSKDDGDVERRNLEDLSSTSPTDGTIGKRV. The segment covering 63–76 has biased composition (basic and acidic residues); the sequence is MSKDDGDVERRNLE. Residue Ser257 is modified to Phosphoserine; by host. A disordered region spans residues 265–324; the sequence is ISPEDEEPSSVGGKPNESIGRTIEGQSIRDNLQAKDNKSTDVPGAGPKDSAVKEEPPQKR. Ser350 carries the phosphoserine; by host modification. Zn(2+) contacts are provided by His408, Cys427, Cys431, Cys443, Cys445, Cys448, Cys452, and Cys455.

The protein belongs to the paramyxoviruses V protein family. Interacts with host IFIH1/MDA5, DHX58/LGP2, STAT1 and STAT2. Interacts (via N-terminus) with host UBXN1 (via C-terminal UBX domain); this interaction inhibits interferon-alpha/beta (IFN-alpha/beta) production. Interacts with host RIGI regulatory protein (via CARDs domain) and host TRIM25 (via SPRY domain); these interactions prevent TRIM25-mediated ubiquitination of RIG-I and disrupts downstream RIG-I signaling.

It localises to the host cytoplasm. Functionally, plays an essential role in the inhibition of host immune response. Prevents the establishment of cellular antiviral state by blocking interferon-alpha/beta (IFN-alpha/beta) production and signaling pathway. Interacts with host IFIH1/MDA5 and DHX58/LGP2 to inhibit the transduction pathway involved in the activation of IFN-beta promoter, thus protecting the virus against cell antiviral state. Blocks the type I interferon signaling pathway by interacting with host STAT1 and STAT2 and thereby inhibiting their phosphorylation and subsequent nuclear translocation. Efficiently blocks the type II interferon signaling pathway. Suppresses interferon induction by interacting with and stabilizing host UBXN1, a negative regulator of both RIG-I-like receptors (RLR) and NF-kappa-B pathways. Blocks the type I interferon signaling pathway by disrupting the RIG-I signaling pathway. This Cynopterus brachyotis (Lesser short-nosed fruit bat) protein is Non-structural protein V (P/V/C).